The following is a 412-amino-acid chain: Early growth response protein 2b (412 aa).

Residues 269–299 are disordered; sequence YTPQNLPLRPILRPRKYPNRPSKTPVHERPY. 3 C2H2-type zinc fingers span residues 299–323, 329–351, and 357–379; these read YPCPAEGCDRRFSRSDELTRHIRIH, FQCRICMRNFSRSDHLTTHIRTH, and FACDFCGRKFARSDERKRHTKIH. Residues 371-412 form a disordered region; it reads ERKRHTKIHLRQKERKSSSSSTGVSSSERGVATSICSSSSNQ. The segment covering 374 to 384 has biased composition (basic residues); it reads RHTKIHLRQKE. Residues 388–401 are compositionally biased toward low complexity; the sequence is SSSSTGVSSSERGV.

The protein belongs to the EGR C2H2-type zinc-finger protein family.

It localises to the nucleus. Its function is as follows. Sequence-specific DNA-binding transcription factor. Binds to two specific DNA sites located in the promoter region of HOXA4. The chain is Early growth response protein 2b (egr2b) from Danio rerio (Zebrafish).